Consider the following 435-residue polypeptide: MSPAANMFRTLTLTALVSAVVSAYESQVPLNPQFPEYLNEEWDDSCSISKSTAYDVHDGPNTFSSSPSEDIHSVKISPHVNATNWEQWEFDGLSHTGLSGLLMAFSRDATYAFFGQGNLRVEFYITLGDGSIIQELDFISESYVIDCPDFTAGIWNSTDRSYSFYVTKDHQFARLKFDSWRVRGGFTMSSSTRPHLADGSPWTPDGGKPDATEVSPGLFYGLSMGGAEVDVDATLSSGKRITFKGRGGSTRLWATEGWLKLCDGWKVIRAWAGPYSIVYWDVLSRIDRGVRYVSGHLFYHDELLVGSRVGQPSDKADYVLFNDQFDGEMSGKYKDKNTGHHLEFASPARDKKWTFDVQHIVTQYEIGAGAGFGMSGFANRVVGGEVGGVQYEGKGQSEQTYWPEHIEEWKIWLVWGLGFLGRGKTYVMKLVGYVL.

A signal peptide spans 1–23 (MSPAANMFRTLTLTALVSAVVSA). Asn81 and Asn156 each carry an N-linked (GlcNAc...) asparagine glycan.

It belongs to the Diels-Alderase family.

It participates in mycotoxin biosynthesis. In terms of biological role, hexane cyclase; part of the gene cluster that mediates the biosynthesis of xenoacremones such as xenoacremone A, a compound that shows inhibitory activity toward the PI3K/AKT signaling pathway and which has the ability to induce apoptosis of A549 lung cancer cells. Within the pathway, cooperation of the hybrid PKS-NRPS xenE and the trans-acting enoyl reductase xenG is responsible for the formation of the reduced tyrosine-nonaketide derivative. The alpha/beta hydrolase xenA then accelerates intramolecular nucleophilic attack to give a pyrrolidone derivative. Subsequently, three enzymes, xenF, xenD, and xenC, coordinately participate in the conversion to xenoacremone B. XenF catalyzes sigmatropic rearrangement to form an A-ring, which leads to an unusual intermediate with a hexane ring, which is required for the formation of the tricarbocyclic product. Epoxidation catalyzed by xenD and the formation of the paracyclophane ether catalyzed by xenC initiate a spontaneous intramolecular Diels-Alder (IMDA) reaction to yield xenoacremone B. Spontaneous hydration of xenoacremone B leads to the formation of xenoacremone A, which undergoes subsequent methylation to afford xenoacremone C. The polypeptide is Hexane cyclase xenF (Xenoacremonium sinensis (Endophyte fungus)).